The chain runs to 377 residues: Putative F-box protein At1g70380 (377 aa).

Residues Asn-3–Ala-48 form the F-box domain.

The chain is Putative F-box protein At1g70380 from Arabidopsis thaliana (Mouse-ear cress).